A 328-amino-acid chain; its full sequence is ABC transporter I family member 20 (328 aa).

Residues 14 to 257 (VEISGLRFTY…SKKSLMRTVE (244 aa)) form the ABC transporter domain. 55–62 (GSNGAGKT) serves as a coordination point for ATP. A disordered region spans residues 263–295 (ERDEERKRRKERKANGLPEFETRTEESRVTGDP). Residues 282–291 (FETRTEESRV) are compositionally biased toward basic and acidic residues.

This sequence belongs to the ABC transporter superfamily. ABCI family.

Its subcellular location is the cytoplasm. In Arabidopsis thaliana (Mouse-ear cress), this protein is ABC transporter I family member 20 (ABCI20).